We begin with the raw amino-acid sequence, 347 residues long: Olfactory receptor 1L6 (347 aa).

Over 1 to 62 (MSYFYRLKLM…GLSSNPQLQK (62 aa)) the chain is Extracellular. The N-linked (GlcNAc...) asparagine glycan is linked to N41. Residues 63–86 (PLFAIFLIMYLLAAVGNVLIIPAI) traverse the membrane as a helical segment. The Cytoplasmic segment spans residues 87–94 (YSDPRLHT). The chain crosses the membrane as a helical span at residues 95 to 116 (PMYFFLSNLSFMDICFTTVIVP). Over 117–137 (KMLVNFLSETKVISYVGCLAQ) the chain is Extracellular. Cysteines 134 and 226 form a disulfide. The chain crosses the membrane as a helical span at residues 138 to 157 (MYFFMAFGNTDSYLLASMAI). Topologically, residues 158–176 (DRLVAICNPLHYDVVMKPR) are cytoplasmic. The chain crosses the membrane as a helical span at residues 177 to 195 (HCLLMLLGSCSISHLHSLF). Residues 196–233 (RVLLMSRLSFCASHIIKHFFCDTQPVLKLSCSDTSSSQ) lie on the Extracellular side of the membrane. A helical membrane pass occupies residues 234-256 (MVVMTETLAVIVTPFLCIIFSYL). Over 257 to 273 (RIMVTVLRIPSAAGKWK) the chain is Cytoplasmic. A helical membrane pass occupies residues 274–296 (AFSTCGSHLTAVALFYGSIIYVY). The Extracellular portion of the chain corresponds to 297 to 309 (FRPLSMYSVVRDR). The helical transmembrane segment at 310–329 (VATVMYTVVTPMLNPFIYSL) threads the bilayer. Residues 330–347 (RNKDMKRGLKKLQDRIYR) lie on the Cytoplasmic side of the membrane.

It belongs to the G-protein coupled receptor 1 family.

It is found in the cell membrane. Functionally, odorant receptor. The polypeptide is Olfactory receptor 1L6 (OR1L6) (Homo sapiens (Human)).